An 84-amino-acid chain; its full sequence is Tetrahydromethanopterin S-methyltransferase subunit G (84 aa).

Residues 50–70 form a helical membrane-spanning segment; sequence IGILYGLVIGIILSYILPALI.

The protein belongs to the MtrG family. The complex is composed of 8 subunits; MtrA, MtrB, MtrC, MtrD, MtrE, MtrF, MtrG and MtrH.

The protein resides in the cell membrane. It carries out the reaction 5-methyl-5,6,7,8-tetrahydromethanopterin + coenzyme M + 2 Na(+)(in) = 5,6,7,8-tetrahydromethanopterin + methyl-coenzyme M + 2 Na(+)(out). It functions in the pathway one-carbon metabolism; methanogenesis from CO(2); methyl-coenzyme M from 5,10-methylene-5,6,7,8-tetrahydromethanopterin: step 2/2. Functionally, part of a complex that catalyzes the formation of methyl-coenzyme M and tetrahydromethanopterin from coenzyme M and methyl-tetrahydromethanopterin. This is an energy-conserving, sodium-ion translocating step. In Methanocaldococcus jannaschii (strain ATCC 43067 / DSM 2661 / JAL-1 / JCM 10045 / NBRC 100440) (Methanococcus jannaschii), this protein is Tetrahydromethanopterin S-methyltransferase subunit G.